The sequence spans 72 residues: UPF0154 protein EF_1734 (72 aa).

The chain crosses the membrane as a helical span at residues 4–26; it reads GWVVLIAVIALLVGAAGGFFLAR.

This sequence belongs to the UPF0154 family.

The protein localises to the membrane. The sequence is that of UPF0154 protein EF_1734 from Enterococcus faecalis (strain ATCC 700802 / V583).